Here is a 286-residue protein sequence, read N- to C-terminus: UDP-3-O-acyl-N-acetylglucosamine deacetylase (286 aa).

Zn(2+) contacts are provided by His79, His237, and Asp241. His264 serves as the catalytic Proton donor.

It belongs to the LpxC family. Zn(2+) is required as a cofactor.

It catalyses the reaction a UDP-3-O-[(3R)-3-hydroxyacyl]-N-acetyl-alpha-D-glucosamine + H2O = a UDP-3-O-[(3R)-3-hydroxyacyl]-alpha-D-glucosamine + acetate. It functions in the pathway glycolipid biosynthesis; lipid IV(A) biosynthesis; lipid IV(A) from (3R)-3-hydroxytetradecanoyl-[acyl-carrier-protein] and UDP-N-acetyl-alpha-D-glucosamine: step 2/6. In terms of biological role, catalyzes the hydrolysis of UDP-3-O-myristoyl-N-acetylglucosamine to form UDP-3-O-myristoylglucosamine and acetate, the committed step in lipid A biosynthesis. This Chlamydia trachomatis serovar A (strain ATCC VR-571B / DSM 19440 / HAR-13) protein is UDP-3-O-acyl-N-acetylglucosamine deacetylase.